The primary structure comprises 322 residues: MVYVFSILELISFLIPILLSVAFLTLVERKVLGYMQFRNGPNVVGPFGLLQPFADGMKVFIKEELKPVNSSPYLFFFSPLLFLALALLLWNFMPVHTPTLDLQLSLLLVLGLSSLSVYAILGSGWASNSKYSLLGAIRAVAQTISYEISLALILLSLIIFSSSFNLTYIMNTQEFSWFSLSCLPLFYIWFVSTLAETNRAPFDLTEGESEIVSGYNVEYAGGPFVLFFIAEYANIILMNYFSVVLFLGGPSPLNNLFPISIIIVGIKTTFLFSVLWVRAAYPRFRYDQLMFLTWKSYLPLSIGALCAILALVALLGISLPLF.

8 consecutive transmembrane segments (helical) span residues 4-24 (VFSI…VAFL), 73-93 (YLFF…WNFM), 106-126 (LLLV…SGWA), 150-170 (LALI…TYIM), 175-195 (FSWF…STLA), 224-244 (FVLF…FSVV), 257-277 (FPIS…VLWV), and 302-322 (IGAL…LPLF).

This sequence belongs to the complex I subunit 1 family.

The protein localises to the mitochondrion inner membrane. The catalysed reaction is a ubiquinone + NADH + 5 H(+)(in) = a ubiquinol + NAD(+) + 4 H(+)(out). Functionally, core subunit of the mitochondrial membrane respiratory chain NADH dehydrogenase (Complex I) that is believed to belong to the minimal assembly required for catalysis. Complex I functions in the transfer of electrons from NADH to the respiratory chain. The immediate electron acceptor for the enzyme is believed to be ubiquinone. This is NADH-ubiquinone oxidoreductase chain 1 (ND1) from Strongylocentrotus purpuratus (Purple sea urchin).